The sequence spans 306 residues: Glutaminase (306 aa).

Ser-64, Asn-115, Glu-159, Asn-166, Tyr-190, Tyr-242, and Val-260 together coordinate substrate.

It belongs to the glutaminase family. As to quaternary structure, homotetramer.

It catalyses the reaction L-glutamine + H2O = L-glutamate + NH4(+). This Vibrio parahaemolyticus serotype O3:K6 (strain RIMD 2210633) protein is Glutaminase.